Consider the following 69-residue polypeptide: Small ribosomal subunit protein uS7 (69 aa).

It belongs to the universal ribosomal protein uS7 family. In terms of assembly, part of the 30S ribosomal subunit.

Functionally, one of the primary rRNA binding proteins, it binds directly to 16S rRNA where it nucleates assembly of the head domain of the 30S subunit. Is located at the subunit interface close to the decoding center. The chain is Small ribosomal subunit protein uS7 (rps7) from Methanococcoides methylutens.